Here is a 117-residue protein sequence, read N- to C-terminus: Calcitonin receptor-stimulating peptide 2 (117 aa).

The N-terminal stretch at 1–25 (MGFWKFPPFLVLSILVLYQAGMFHT) is a signal peptide. Positions 26-79 (APVRLPLESSFDSATLTEEEVSLLLVAMVKDYVQMKATVLEQESEDFSITAQEK) are excised as a propeptide. The cysteines at positions 81 and 86 are disulfide-linked.

It belongs to the calcitonin family. As to expression, mainly expressed in the thyroid gland and CNS. Found in the nerve cells of the cerebrum, hippocampus, hypothalamus, pons/midbrain and thalamus. Also detected in the glia-like cells of pons/midbrain and in meninx of tactus opticus.

Its subcellular location is the secreted. The protein is Calcitonin receptor-stimulating peptide 2 (CRSP2) of Sus scrofa (Pig).